A 428-amino-acid polypeptide reads, in one-letter code: MAENDVDNELLDYEEDEVENAAGGDGSEAPPKKDVKGSYVSIHSSGFRDFLLKPELLRAIVDCGFEHPSEVQHECIPQAILGMDVLCQAKSGMGKTAVFVLATLQQLEPVTGQVSVLVMCHTRELAFQISKEYERFSKYMPSVKVAVFFGGLAVKKDEEVLKKNCPHIVVGTPGRILALARNKSLNLKHIKHFILDECDKMLEQLDMRRDVQEIFRMTPHEKQVMMFSATLSKEIRPVCRKFMQDPMEIFVDDETKLTLHGLQQYYVKLKDNEKNRKLFDLLDVLEFNQVVIFVKSVQRCIALAQLLVEQNFPAIAIHRGMPQEERLSRYQQFKDFQRRILVATNLFGRGMDIERVNIAFNYDMPEDSDTYLHRVARAGRFGTKGLAITFVSDENDAKILNDVQDRFEVNISELPDEIDISSYIEQTR.

Over residues 1–19 the composition is skewed to acidic residues; the sequence is MAENDVDNELLDYEEDEVE. Residues 1–35 are disordered; sequence MAENDVDNELLDYEEDEVENAAGGDGSEAPPKKDV. The Q motif motif lies at 45–73; that stretch reads SGFRDFLLKPELLRAIVDCGFEHPSEVQH. The Helicase ATP-binding domain maps to 76 to 249; that stretch reads IPQAILGMDV…RKFMQDPMEI (174 aa). 89 to 96 is an ATP binding site; it reads AKSGMGKT. The DECD box signature appears at 196 to 199; the sequence is DECD. The Helicase C-terminal domain maps to 261–422; the sequence is GLQQYYVKLK…ELPDEIDISS (162 aa).

This sequence belongs to the DEAD box helicase family. DECD subfamily. Component of the transcription/export (TREX) complex at least composed of ALYREF/THOC4, DDX39B, SARNP/CIP29, CHTOP and the THO subcomplex.

It localises to the nucleus. Its subcellular location is the nucleus speckle. It catalyses the reaction ATP + H2O = ADP + phosphate + H(+). Functionally, involved in nuclear export of spliced and unspliced mRNA. Component of the TREX complex which is thought to couple mRNA transcription, processing and nuclear export, and specifically associates with spliced mRNA and not with unspliced pre-mRNA. The TREX complex is recruited to spliced mRNAs by a transcription-independent mechanism, binds to mRNA upstream of the exon-junction complex (EJC) and is recruited in a splicing- and cap-dependent manner to a region near the 5' end of the mRNA where it functions in mRNA export to the cytoplasm via the TAP/NXF1 pathway. Involved in transcription elongation and genome stability. Splice factor that is required for the first ATP-dependent step in spliceosome assembly and for the interaction of U2 snRNP with the branchpoint. Has both RNA-stimulated ATP binding/hydrolysis activity and ATP-dependent RNA unwinding activity. Even with the stimulation of RNA, the ATPase activity is weak. Can only hydrolyze ATP but not other NTPs. The RNA stimulation of ATPase activity does not have a strong preference for the sequence and length of the RNA. However, ssRNA stimulates the ATPase activity much more strongly than dsRNA. Can unwind 5' or 3' overhangs or blunt end RNA duplexes in vitro. The ATPase and helicase activities are not influenced by U2AF2; the effect of ALYREF/THOC4 is reported conflictingly. The sequence is that of Spliceosome RNA helicase DDX39B (DDX39B) from Gallus gallus (Chicken).